The following is a 202-amino-acid chain: Small ribosomal subunit protein uS4c (202 aa).

The 64-residue stretch at 90–153 folds into the S4 RNA-binding domain; sequence MRLDNVIFRL…KSETIISKNI (64 aa).

The protein belongs to the universal ribosomal protein uS4 family. As to quaternary structure, part of the 30S ribosomal subunit. Contacts protein S5. The interaction surface between S4 and S5 is involved in control of translational fidelity.

Its subcellular location is the plastid. It localises to the chloroplast. Its function is as follows. One of the primary rRNA binding proteins, it binds directly to 16S rRNA where it nucleates assembly of the body of the 30S subunit. Functionally, with S5 and S12 plays an important role in translational accuracy. The chain is Small ribosomal subunit protein uS4c (rps4) from Arbusculohypopterygium arbuscula (Moss).